Consider the following 348-residue polypeptide: Phospho-2-dehydro-3-deoxyheptonate aldolase, Trp-sensitive (348 aa).

Belongs to the class-I DAHP synthase family.

The enzyme catalyses D-erythrose 4-phosphate + phosphoenolpyruvate + H2O = 7-phospho-2-dehydro-3-deoxy-D-arabino-heptonate + phosphate. It functions in the pathway metabolic intermediate biosynthesis; chorismate biosynthesis; chorismate from D-erythrose 4-phosphate and phosphoenolpyruvate: step 1/7. Functionally, stereospecific condensation of phosphoenolpyruvate (PEP) and D-erythrose-4-phosphate (E4P) giving rise to 3-deoxy-D-arabino-heptulosonate-7-phosphate (DAHP). The polypeptide is Phospho-2-dehydro-3-deoxyheptonate aldolase, Trp-sensitive (aroH) (Escherichia coli O6:H1 (strain CFT073 / ATCC 700928 / UPEC)).